We begin with the raw amino-acid sequence, 119 residues long: Large ribosomal subunit protein bL17 (119 aa).

This sequence belongs to the bacterial ribosomal protein bL17 family. Part of the 50S ribosomal subunit. Contacts protein L32.

This is Large ribosomal subunit protein bL17 from Mycoplasma mycoides subsp. mycoides SC (strain CCUG 32753 / NCTC 10114 / PG1).